Here is a 245-residue protein sequence, read N- to C-terminus: 1-(5-phosphoribosyl)-5-[(5-phosphoribosylamino)methylideneamino] imidazole-4-carboxamide isomerase (245 aa).

The Proton acceptor role is filled by aspartate 8. The Proton donor role is filled by aspartate 130.

It belongs to the HisA/HisF family.

It is found in the cytoplasm. It catalyses the reaction 1-(5-phospho-beta-D-ribosyl)-5-[(5-phospho-beta-D-ribosylamino)methylideneamino]imidazole-4-carboxamide = 5-[(5-phospho-1-deoxy-D-ribulos-1-ylimino)methylamino]-1-(5-phospho-beta-D-ribosyl)imidazole-4-carboxamide. It functions in the pathway amino-acid biosynthesis; L-histidine biosynthesis; L-histidine from 5-phospho-alpha-D-ribose 1-diphosphate: step 4/9. In Ectopseudomonas mendocina (strain ymp) (Pseudomonas mendocina), this protein is 1-(5-phosphoribosyl)-5-[(5-phosphoribosylamino)methylideneamino] imidazole-4-carboxamide isomerase.